Reading from the N-terminus, the 1174-residue chain is HEAT repeat-containing protein 6 (1174 aa).

Residues 168-207 (NELLGPTGILVNLCDPSQPDPELWREAIHCMANLCLGVPG) form an HEAT 1 repeat. 2 disordered regions span residues 304–346 (GRSP…EELK) and 373–392 (LGPQ…KDHF). The span at 323–335 (SKKKRKAGKQKKG) shows a compositional bias: basic residues. Residues 336-346 (HQGEESKEELK) are compositionally biased toward basic and acidic residues. HEAT repeat units lie at residues 460–498 (GIGS…GSKQ), 523–560 (SIRE…NAPY), and 566–603 (GLLT…AQVS). The segment at 619-648 (SQNSGSATPSDPESNRKESMLEGGKKNGLH) is disordered. Residues 631–648 (ESNRKESMLEGGKKNGLH) show a composition bias toward basic and acidic residues.

The chain is HEAT repeat-containing protein 6 (heatr6) from Xenopus laevis (African clawed frog).